The primary structure comprises 475 residues: AAA-ATPase At1g43910 (475 aa).

A helical transmembrane segment spans residues 11–28 (VSAVFSLYTSFSAITMLF). Thr85 carries the phosphothreonine modification. Residue 246–253 (GPPGTGKS) coordinates ATP. Disordered regions lie at residues 306–328 (SRRRQSKKKEEDGGEDDGEPQKR) and 453–475 (KGEDSSVEEEGEIEDAETKEAET). Over residues 457–467 (SSVEEEGEIED) the composition is skewed to acidic residues.

It belongs to the AAA ATPase family. BCS1 subfamily. Requires Mg(2+) as cofactor. Expressed in developing shoots.

Its subcellular location is the membrane. It catalyses the reaction ATP + H2O = ADP + phosphate + H(+). This is AAA-ATPase At1g43910 from Arabidopsis thaliana (Mouse-ear cress).